Here is a 373-residue protein sequence, read N- to C-terminus: Anhydro-N-acetylmuramic acid kinase (373 aa).

Residue 12 to 19 (GTSLDGVD) participates in ATP binding.

It belongs to the anhydro-N-acetylmuramic acid kinase family.

The enzyme catalyses 1,6-anhydro-N-acetyl-beta-muramate + ATP + H2O = N-acetyl-D-muramate 6-phosphate + ADP + H(+). The protein operates within amino-sugar metabolism; 1,6-anhydro-N-acetylmuramate degradation. It participates in cell wall biogenesis; peptidoglycan recycling. In terms of biological role, catalyzes the specific phosphorylation of 1,6-anhydro-N-acetylmuramic acid (anhMurNAc) with the simultaneous cleavage of the 1,6-anhydro ring, generating MurNAc-6-P. Is required for the utilization of anhMurNAc either imported from the medium or derived from its own cell wall murein, and thus plays a role in cell wall recycling. The protein is Anhydro-N-acetylmuramic acid kinase of Salmonella gallinarum (strain 287/91 / NCTC 13346).